The chain runs to 304 residues: Acetylglutamate kinase (304 aa).

Substrate-binding positions include 75 to 76 (GG), R97, and N196.

This sequence belongs to the acetylglutamate kinase family. ArgB subfamily.

It is found in the cytoplasm. It catalyses the reaction N-acetyl-L-glutamate + ATP = N-acetyl-L-glutamyl 5-phosphate + ADP. It participates in amino-acid biosynthesis; L-arginine biosynthesis; N(2)-acetyl-L-ornithine from L-glutamate: step 2/4. Its function is as follows. Catalyzes the ATP-dependent phosphorylation of N-acetyl-L-glutamate. The sequence is that of Acetylglutamate kinase from Corynebacterium urealyticum (strain ATCC 43042 / DSM 7109).